Consider the following 201-residue polypeptide: 3-isopropylmalate dehydratase small subunit (201 aa).

The protein belongs to the LeuD family. LeuD type 1 subfamily. In terms of assembly, heterodimer of LeuC and LeuD.

It carries out the reaction (2R,3S)-3-isopropylmalate = (2S)-2-isopropylmalate. Its pathway is amino-acid biosynthesis; L-leucine biosynthesis; L-leucine from 3-methyl-2-oxobutanoate: step 2/4. In terms of biological role, catalyzes the isomerization between 2-isopropylmalate and 3-isopropylmalate, via the formation of 2-isopropylmaleate. This Salmonella paratyphi A (strain ATCC 9150 / SARB42) protein is 3-isopropylmalate dehydratase small subunit.